We begin with the raw amino-acid sequence, 505 residues long: Metal transporter Nramp3.2 (505 aa).

12 consecutive transmembrane segments (helical) span residues 50–70 (LWLFTGPGFLMSIAFLDPGNL), 78–98 (AIAGYSLLWLLLWATAMGLLV), 127–147 (MVLWIMAELALIGADIQEVIG), 159–179 (FVPLWAGVTITACDCFIFLFL), 187–207 (LEAVFAVLIGIMAVTFGWMFA), 233–253 (AVGVVGCIIMPHNVFLHSALV), 280–300 (ALVISFVINLFVTTVFAKGFY), 321–341 (YGGGFFPILYIWGIGLLAAGQ), 369–389 (ALITRSCAIIPTMIVALVFDT), 400–420 (WLNVLQSIQIPFALIPLLCLV), 439–459 (AWLVAALVMVINGYLLLDFFF), and 466–486 (AFTTVVCGFTGAYVAFIIYLI).

It belongs to the NRAMP (TC 2.A.55) family. Expressed in roots, stems, buds and leaves.

The protein resides in the vacuole membrane. It carries out the reaction Mn(2+)(in) = Mn(2+)(out). The enzyme catalyses Fe(2+)(in) = Fe(2+)(out). In terms of biological role, divalent metal transporter. Can transport manganese (Mn) and iron (Fe). Involved in the release of metals stored in the vacuole. The chain is Metal transporter Nramp3.2 from Populus trichocarpa (Western balsam poplar).